Reading from the N-terminus, the 68-residue chain is uncharacterized protein (68 aa).

Residues 1 to 68 are disordered; sequence METIIRRFSP…GNSKNIKTKK (68 aa). Residues 9-34 are compositionally biased toward basic and acidic residues; the sequence is SPKEKEKEKEKEEKDEKSKDKKEPIK. Positions 42 to 51 are enriched in acidic residues; that stretch reads DEEEEEDEQE.

This is an uncharacterized protein from Dictyostelium discoideum (Social amoeba).